Here is a 320-residue protein sequence, read N- to C-terminus: tRNA N6-adenosine threonylcarbamoyltransferase (320 aa).

Fe cation contacts are provided by His-114 and His-118. Substrate-binding positions include 136 to 140, Asp-169, Gly-182, Asp-186, and Asn-273; that span reads VVSGG. Asp-297 lines the Fe cation pocket.

The protein belongs to the KAE1 / TsaD family. It depends on Fe(2+) as a cofactor.

The protein localises to the cytoplasm. The enzyme catalyses L-threonylcarbamoyladenylate + adenosine(37) in tRNA = N(6)-L-threonylcarbamoyladenosine(37) in tRNA + AMP + H(+). Required for the formation of a threonylcarbamoyl group on adenosine at position 37 (t(6)A37) in tRNAs that read codons beginning with adenine. Is involved in the transfer of the threonylcarbamoyl moiety of threonylcarbamoyl-AMP (TC-AMP) to the N6 group of A37, together with TsaE and TsaB. TsaD likely plays a direct catalytic role in this reaction. This chain is tRNA N6-adenosine threonylcarbamoyltransferase, found in Ureaplasma urealyticum serovar 10 (strain ATCC 33699 / Western).